The following is a 67-amino-acid chain: Large ribosomal subunit protein uL29 (67 aa).

The protein belongs to the universal ribosomal protein uL29 family.

The chain is Large ribosomal subunit protein uL29 from Alkaliphilus oremlandii (strain OhILAs) (Clostridium oremlandii (strain OhILAs)).